The sequence spans 403 residues: Conserved oligomeric Golgi complex subunit 5 (403 aa).

Belongs to the COG5 family. Component of the conserved oligomeric Golgi (COG or Sec34/Sec35) complex which consists of eight different proteins COG1-COG8.

It localises to the golgi apparatus membrane. Its function is as follows. Acts as a component of the peripheral membrane COG complex that is involved in intra-Golgi protein trafficking. COG is located at the cis-Golgi, and regulates tethering of retrograde intra-Golgi vesicles and possibly a number of other membrane trafficking events. This is Conserved oligomeric Golgi complex subunit 5 (COG5) from Saccharomyces cerevisiae (strain ATCC 204508 / S288c) (Baker's yeast).